The following is a 282-amino-acid chain: Bifunctional protein FolD (282 aa).

NADP(+) contacts are provided by residues 164–166 (GAS), Ile189, and Ile230.

It belongs to the tetrahydrofolate dehydrogenase/cyclohydrolase family. Homodimer.

The enzyme catalyses (6R)-5,10-methylene-5,6,7,8-tetrahydrofolate + NADP(+) = (6R)-5,10-methenyltetrahydrofolate + NADPH. It catalyses the reaction (6R)-5,10-methenyltetrahydrofolate + H2O = (6R)-10-formyltetrahydrofolate + H(+). It functions in the pathway one-carbon metabolism; tetrahydrofolate interconversion. Catalyzes the oxidation of 5,10-methylenetetrahydrofolate to 5,10-methenyltetrahydrofolate and then the hydrolysis of 5,10-methenyltetrahydrofolate to 10-formyltetrahydrofolate. This Campylobacter jejuni subsp. jejuni serotype O:6 (strain 81116 / NCTC 11828) protein is Bifunctional protein FolD.